Consider the following 224-residue polypeptide: Ribonuclease T (224 aa).

Acidic residues predominate over residues Met-1–Asp-11. Residues Met-1 to His-20 form a disordered region. One can recognise an Exonuclease domain in the interval Val-32 to Phe-206. Residues Asp-35, Glu-37, His-193, and Asp-198 each contribute to the Mg(2+) site. Catalysis depends on His-193, which acts as the Proton donor/acceptor.

The protein belongs to the RNase T family. Homodimer. Mg(2+) serves as cofactor.

In terms of biological role, trims short 3' overhangs of a variety of RNA species, leaving a one or two nucleotide 3' overhang. Responsible for the end-turnover of tRNA: specifically removes the terminal AMP residue from uncharged tRNA (tRNA-C-C-A). Also appears to be involved in tRNA biosynthesis. This chain is Ribonuclease T, found in Pseudomonas entomophila (strain L48).